The primary structure comprises 281 residues: Pantothenate synthetase (281 aa).

26 to 33 (MGNLHDGH) serves as a coordination point for ATP. The active-site Proton donor is the His33. Gln57 contributes to the (R)-pantoate binding site. Gln57 serves as a coordination point for beta-alanine. 145-148 (GEKD) is a binding site for ATP. Position 151 (Gln151) interacts with (R)-pantoate. Residue 182 to 185 (MSSR) participates in ATP binding.

It belongs to the pantothenate synthetase family. As to quaternary structure, homodimer.

Its subcellular location is the cytoplasm. It carries out the reaction (R)-pantoate + beta-alanine + ATP = (R)-pantothenate + AMP + diphosphate + H(+). It participates in cofactor biosynthesis; (R)-pantothenate biosynthesis; (R)-pantothenate from (R)-pantoate and beta-alanine: step 1/1. Catalyzes the condensation of pantoate with beta-alanine in an ATP-dependent reaction via a pantoyl-adenylate intermediate. This is Pantothenate synthetase from Idiomarina loihiensis (strain ATCC BAA-735 / DSM 15497 / L2-TR).